The following is a 172-amino-acid chain: 2S seed storage-like protein (172 aa).

Residues 1 to 35 form the signal peptide; it reads MGVFSPSTTRLTLKWFSLSVALFLLFHWGIPSVDG. The tract at residues 108-172 is disordered; sequence FMDSDSQEDA…RYSMTGSSFK (65 aa). Positions 151 to 160 are enriched in basic and acidic residues; it reads EPPRRCDIQR.

Belongs to the 2S seed storage albumins family.

The chain is 2S seed storage-like protein from Picea glauca (White spruce).